The primary structure comprises 561 residues: Putative periplasmic trehalase (561 aa).

The first 30 residues, 1–30 (MKSPAPSRPQKMALIPACIFLCFAALSVQA), serve as a signal peptide directing secretion. Substrate is bound by residues Arg148, 155–156 (WD), Asn192, 201–203 (RSQ), 273–275 (RPE), and Gly306. Catalysis depends on proton donor/acceptor residues Asp308 and Glu492. Residue Glu507 participates in substrate binding. The interval 535 to 561 (CDNVPATRPLSESTTQPVKQKEAEPTP) is disordered.

The protein belongs to the glycosyl hydrolase 37 family. As to quaternary structure, monomer.

It is found in the periplasm. The enzyme catalyses alpha,alpha-trehalose + H2O = alpha-D-glucose + beta-D-glucose. In terms of biological role, provides the cells with the ability to utilize trehalose at high osmolarity by splitting it into glucose molecules that can subsequently be taken up by the phosphotransferase-mediated uptake system. This Escherichia coli O157:H7 protein is Putative periplasmic trehalase.